The following is a 652-amino-acid chain: DNA ligase (652 aa).

Residues 29-33 (DSEYD), 78-79 (SL), and E107 contribute to the NAD(+) site. The active-site N6-AMP-lysine intermediate is K109. NAD(+) is bound by residues R130, E164, K278, and K302. Residues C395, C398, C413, and C418 each contribute to the Zn(2+) site. A BRCT domain is found at 577-652 (DRQAELFGLT…IEDEDWLLNL (76 aa)).

The protein belongs to the NAD-dependent DNA ligase family. LigA subfamily. Mg(2+) serves as cofactor. Requires Mn(2+) as cofactor.

It carries out the reaction NAD(+) + (deoxyribonucleotide)n-3'-hydroxyl + 5'-phospho-(deoxyribonucleotide)m = (deoxyribonucleotide)n+m + AMP + beta-nicotinamide D-nucleotide.. Functionally, DNA ligase that catalyzes the formation of phosphodiester linkages between 5'-phosphoryl and 3'-hydroxyl groups in double-stranded DNA using NAD as a coenzyme and as the energy source for the reaction. It is essential for DNA replication and repair of damaged DNA. This Streptococcus equi subsp. zooepidemicus (strain MGCS10565) protein is DNA ligase.